A 99-amino-acid chain; its full sequence is Integration host factor subunit alpha (99 aa).

The protein belongs to the bacterial histone-like protein family. As to quaternary structure, heterodimer of an alpha and a beta chain.

Functionally, this protein is one of the two subunits of integration host factor, a specific DNA-binding protein that functions in genetic recombination as well as in transcriptional and translational control. This is Integration host factor subunit alpha from Psychrobacter arcticus (strain DSM 17307 / VKM B-2377 / 273-4).